We begin with the raw amino-acid sequence, 181 residues long: ADP-ribosylation factor-like protein 1 (181 aa).

Residue glycine 2 is the site of N-myristoyl glycine attachment. GTP contacts are provided by residues 24–31 (GLDGAGKT), 45–48 (TIPT), glycine 70, 126–129 (NKQD), and 160–161 (AT). The Mg(2+) site is built by threonine 31 and threonine 48.

It belongs to the small GTPase superfamily. Arf family. In terms of assembly, the GTP-bound form interacts with GOLGA1. The GTP-bound form interacts with GOLGA4 and RGPD8. The GTP-bound form directly interacts with ARFIP2. Binds to SCOC, preferentially in its GTP-bound form. May interact with UNC119. Interacts with ARFIP1; this interaction directs ARFIP1 to the trans-Golgi membranes. Interacts with ARFGEF1 (via N-terminus).

The protein localises to the golgi apparatus membrane. It localises to the golgi apparatus. It is found in the trans-Golgi network membrane. The protein resides in the membrane. In terms of biological role, GTP-binding protein that recruits several effectors, such as golgins, arfaptins and Arf-GEFs to the trans-Golgi network, and modulates their functions at the Golgi complex. Plays thereby a role in a wide range of fundamental cellular processes, including cell polarity, innate immunity, or protein secretion mediated by arfaptins, which were shown to play a role in maintaining insulin secretion from pancreatic beta cells. The polypeptide is ADP-ribosylation factor-like protein 1 (ARL1) (Bos taurus (Bovine)).